The sequence spans 140 residues: MRHGKAGRKLNRTASHRKAMFANMAASLITHEQIVTTLPKAKEIRPIVEKLVTLGKRGDLHARRQAISQIRDAAVVSKLFDTIATRYATRNGGYLRIMKAGFRQGDNAAMAVVEFVDRDTFAKGAADKARVAAEEQAVAA.

It belongs to the bacterial ribosomal protein bL17 family. As to quaternary structure, part of the 50S ribosomal subunit. Contacts protein L32.

This is Large ribosomal subunit protein bL17 from Rhizobium leguminosarum bv. trifolii (strain WSM2304).